The chain runs to 143 residues: Large ribosomal subunit protein uL11 (143 aa).

It belongs to the universal ribosomal protein uL11 family. In terms of assembly, part of the ribosomal stalk of the 50S ribosomal subunit. Interacts with L10 and the large rRNA to form the base of the stalk. L10 forms an elongated spine to which L12 dimers bind in a sequential fashion forming a multimeric L10(L12)X complex. One or more lysine residues are methylated.

Forms part of the ribosomal stalk which helps the ribosome interact with GTP-bound translation factors. The sequence is that of Large ribosomal subunit protein uL11 from Clavibacter sepedonicus (Clavibacter michiganensis subsp. sepedonicus).